The chain runs to 273 residues: MPTKKWEDEESSSGSSDESSPAVAVSVPRRKFDDEEANDSDVLDSWDAAEDSEVEREKAKKAAEAKAKAEAEAKANKKTKAARINEHKQRRKEAEESDESDDETESQRRERLRRTEKEADLAHAEDLFGDIGVPAGRKVKAASTSVSIDPSDPSKTVELSDMPIFNPKTKTQFEDMRQALIPLITASSGRKPHYNNFMEEFVRQLCADMPSENIKKISSKLTALSNEKMKQEKAAAGTKKTKAAKTKTSLVANRAGVTDTNSYEDTFGDDDFM.

The disordered stretch occupies residues 1 to 158 (MPTKKWEDEE…DPSDPSKTVE (158 aa)). Residues 34–54 (DEEANDSDVLDSWDAAEDSEV) are compositionally biased toward acidic residues. A coiled-coil region spans residues 50 to 97 (EDSEVEREKAKKAAEAKAKAEAEAKANKKTKAARINEHKQRRKEAEES). A compositionally biased stretch (basic and acidic residues) spans 55-75 (EREKAKKAAEAKAKAEAEAKA). Positions 95 to 104 (EESDESDDET) are enriched in acidic residues. Over residues 105–126 (ESQRRERLRRTEKEADLAHAED) the composition is skewed to basic and acidic residues.

It belongs to the eIF-3 subunit J family. In terms of assembly, component of the eukaryotic translation initiation factor 3 (eIF-3) complex.

It localises to the cytoplasm. Its function is as follows. Component of the eukaryotic translation initiation factor 3 (eIF-3) complex, which is involved in protein synthesis of a specialized repertoire of mRNAs and, together with other initiation factors, stimulates binding of mRNA and methionyl-tRNAi to the 40S ribosome. The eIF-3 complex specifically targets and initiates translation of a subset of mRNAs involved in cell proliferation. The protein is Eukaryotic translation initiation factor 3 subunit J of Pyricularia oryzae (strain 70-15 / ATCC MYA-4617 / FGSC 8958) (Rice blast fungus).